Reading from the N-terminus, the 139-residue chain is MNFKTALICFALLLIGTLCSAYSNQERQRDSRRVAEIMRTSLDDNTKINRIQELLTIYNRMAPSLRPDERARIDRFISRHTEGIIVDGVPSQGGARKIFKKTLSPAAKSVATGFFTELGASLASLFTSWFPTTTTERNH.

An N-terminal signal peptide occupies residues 1 to 21 (MNFKTALICFALLLIGTLCSA).

This sequence belongs to the Turandot family.

The protein resides in the secreted. A humoral factor that may play a role in stress tolerance. This is Protein Turandot B from Drosophila sechellia (Fruit fly).